The following is a 425-amino-acid chain: Serine--tRNA ligase (425 aa).

230–232 provides a ligand contact to L-serine; it reads TSE. Residues 261–263 and V277 contribute to the ATP site; that span reads RRE. Residue E284 participates in L-serine binding. Residue 348 to 351 coordinates ATP; that stretch reads ELTS. Residue T382 participates in L-serine binding.

Belongs to the class-II aminoacyl-tRNA synthetase family. Type-1 seryl-tRNA synthetase subfamily. In terms of assembly, homodimer. The tRNA molecule binds across the dimer.

The protein resides in the cytoplasm. The enzyme catalyses tRNA(Ser) + L-serine + ATP = L-seryl-tRNA(Ser) + AMP + diphosphate + H(+). The catalysed reaction is tRNA(Sec) + L-serine + ATP = L-seryl-tRNA(Sec) + AMP + diphosphate + H(+). It functions in the pathway aminoacyl-tRNA biosynthesis; selenocysteinyl-tRNA(Sec) biosynthesis; L-seryl-tRNA(Sec) from L-serine and tRNA(Sec): step 1/1. In terms of biological role, catalyzes the attachment of serine to tRNA(Ser). Is also able to aminoacylate tRNA(Sec) with serine, to form the misacylated tRNA L-seryl-tRNA(Sec), which will be further converted into selenocysteinyl-tRNA(Sec). This Streptomyces coelicolor (strain ATCC BAA-471 / A3(2) / M145) protein is Serine--tRNA ligase.